Here is a 73-residue protein sequence, read N- to C-terminus: uncharacterized protein (73 aa).

This sequence belongs to the asfivirus DP63R family.

This is an uncharacterized protein from African swine fever virus (isolate Tick/Malawi/Lil 20-1/1983) (ASFV).